Consider the following 200-residue polypeptide: Holliday junction branch migration complex subunit RuvA (200 aa).

A domain I region spans residues 1-65; sequence MYEYIKGTLT…ETEHVLYGFS (65 aa). Residues 66-144 are domain II; sequence SRAERECFRL…TLMPLYLEEP (79 aa). Residues 145 to 149 are flexible linker; it reads VVPSS. The segment at 150–200 is domain III; it reads TANSSFKEGIGALMNLGFSRLAADRMMTEAVKELSEEASVAELLPIALRKS.

Belongs to the RuvA family. In terms of assembly, homotetramer. Forms an RuvA(8)-RuvB(12)-Holliday junction (HJ) complex. HJ DNA is sandwiched between 2 RuvA tetramers; dsDNA enters through RuvA and exits via RuvB. An RuvB hexamer assembles on each DNA strand where it exits the tetramer. Each RuvB hexamer is contacted by two RuvA subunits (via domain III) on 2 adjacent RuvB subunits; this complex drives branch migration. In the full resolvosome a probable DNA-RuvA(4)-RuvB(12)-RuvC(2) complex forms which resolves the HJ.

The protein localises to the cytoplasm. In terms of biological role, the RuvA-RuvB-RuvC complex processes Holliday junction (HJ) DNA during genetic recombination and DNA repair, while the RuvA-RuvB complex plays an important role in the rescue of blocked DNA replication forks via replication fork reversal (RFR). RuvA specifically binds to HJ cruciform DNA, conferring on it an open structure. The RuvB hexamer acts as an ATP-dependent pump, pulling dsDNA into and through the RuvAB complex. HJ branch migration allows RuvC to scan DNA until it finds its consensus sequence, where it cleaves and resolves the cruciform DNA. The polypeptide is Holliday junction branch migration complex subunit RuvA (Chlamydia trachomatis serovar D (strain ATCC VR-885 / DSM 19411 / UW-3/Cx)).